We begin with the raw amino-acid sequence, 1323 residues long: Lysine-specific demethylase 3A (1323 aa).

Disordered regions lie at residues 255-287 (TRTG…PSMC), 307-337 (ATPS…PQGC), and 385-416 (SEPK…GLPK). Ser-264 is subject to Phosphoserine. Polar residues-rich tracts occupy residues 266 to 283 (ENNG…SEAS) and 307 to 327 (ATPS…NSPP). A Phosphoserine modification is found at Ser-325. Ser-446 carries the phosphoserine modification. Disordered regions lie at residues 468-487 (AEKK…LKET) and 495-517 (SCCT…LTDP). Composition is skewed to polar residues over residues 477 to 486 (LGSQSQNLKE) and 495 to 507 (SCCT…TQTP). The C6-type zinc-finger motif lies at 662-687 (CDVCDTTIFNLHWVCPRCGFGVCVDC). Positions 885-889 (LRNLL) match the LXXLL motif motif. Lys-895 carries the N6-acetyllysine modification. The region spanning 1060-1283 (MPSRFDDLMA…HCFWLTQEFR (224 aa)) is the JmjC domain. Positions 1122, 1124, and 1251 each coordinate Fe cation.

It belongs to the JHDM2 histone demethylase family. Interacts with VRK1. Fe(2+) serves as cofactor. In terms of tissue distribution, highly expressed in testis (at protein level). Also expressed at high levels in tissues responsive to sympathetic nerve activity such as brown adipose tissue and skeletal muscle.

It localises to the cytoplasm. Its subcellular location is the nucleus. It carries out the reaction N(6),N(6)-dimethyl-L-lysyl(9)-[histone H3] + 2 2-oxoglutarate + 2 O2 = L-lysyl(9)-[histone H3] + 2 formaldehyde + 2 succinate + 2 CO2. Its function is as follows. Histone demethylase that specifically demethylates 'Lys-9' of histone H3, thereby playing a central role in histone code. Preferentially demethylates mono- and dimethylated H3 'Lys-9' residue, with a preference for dimethylated residue, while it has weak or no activity on trimethylated H3 'Lys-9'. Demethylation of Lys residue generates formaldehyde and succinate. Involved in hormone-dependent transcriptional activation, by participating in recruitment to androgen-receptor target genes, resulting in H3 'Lys-9' demethylation and transcriptional activation. Involved in spermatogenesis by regulating expression of target genes such as PRM1 and TNP1 which are required for packaging and condensation of sperm chromatin. Involved in obesity resistance through regulation of metabolic genes such as PPARA and UCP1. The protein is Lysine-specific demethylase 3A (Kdm3a) of Mus musculus (Mouse).